Here is a 295-residue protein sequence, read N- to C-terminus: Tyrosine recombinase XerD (295 aa).

The Core-binding (CB) domain maps to 1-85 (MDTIIEEYLK…TIRSFHQFAL (85 aa)). One can recognise a Tyr recombinase domain in the interval 106 to 289 (KLPDVLEINE…SKSQIRKMYN (184 aa)). Residues Arg-146, Lys-170, His-241, Arg-244, and His-267 contribute to the active site. Tyr-276 functions as the O-(3'-phospho-DNA)-tyrosine intermediate in the catalytic mechanism.

The protein belongs to the 'phage' integrase family. XerD subfamily. As to quaternary structure, forms a cyclic heterotetrameric complex composed of two molecules of XerC and two molecules of XerD.

Its subcellular location is the cytoplasm. In terms of biological role, site-specific tyrosine recombinase, which acts by catalyzing the cutting and rejoining of the recombining DNA molecules. The XerC-XerD complex is essential to convert dimers of the bacterial chromosome into monomers to permit their segregation at cell division. It also contributes to the segregational stability of plasmids. The sequence is that of Tyrosine recombinase XerD from Staphylococcus saprophyticus subsp. saprophyticus (strain ATCC 15305 / DSM 20229 / NCIMB 8711 / NCTC 7292 / S-41).